A 115-amino-acid polypeptide reads, in one-letter code: Cytochrome c oxidase assembly protein COX16 homolog, mitochondrial (115 aa).

Residues Met1 to Phe6 are Mitochondrial matrix-facing. A helical transmembrane segment spans residues Val7–Gln29. Over Val30 to Val115 the chain is Mitochondrial intermembrane.

Belongs to the COX16 family.

The protein resides in the mitochondrion inner membrane. In terms of biological role, required for the assembly of the mitochondrial respiratory chain complex IV (CIV), also known as cytochrome c oxidase. This is Cytochrome c oxidase assembly protein COX16 homolog, mitochondrial from Caenorhabditis elegans.